Reading from the N-terminus, the 505-residue chain is Keratin, type II cuticular Hb1 (505 aa).

Residues 1-106 (MTCGSGFGGR…PNAQCVKQEE (106 aa)) are head. An IF rod domain is found at 106–417 (EKEQIKSLNS…RLLEGEEQRL (312 aa)). Residues 107 to 141 (KEQIKSLNSRFAAFIDKVRFLEQQNKLLETKLQFY) are coil 1A. The linker 1 stretch occupies residues 142-151 (QNRECCQSNL). The segment at 152 to 252 (EPLFEGYIET…YEEEILILQS (101 aa)) is coil 1B. Residue Lys212 forms a Glycyl lysine isopeptide (Lys-Gly) (interchain with G-Cter in SUMO1) linkage. Residues 253–269 (HISDTSVVVKLDNSRDL) form a linker 12 region. Residues 270–413 (NMDCIIAEIK…ATYRRLLEGE (144 aa)) are coil 2. Residues 414-505 (EQRLCEGIGA…GSCGSSCRKC (92 aa)) form a tail region.

Belongs to the intermediate filament family. In terms of assembly, heterotetramer of two type I and two type II keratins. As to expression, abundantly expressed in the differentiating cortex of growing (anagen) hair. Expression is restricted to the keratinocytes of the hair cortex and is absent from inner root sheath and medulla. Expressed in malignant lymph node tissue in breast carcinoma tissue.

The chain is Keratin, type II cuticular Hb1 (KRT81) from Homo sapiens (Human).